The primary structure comprises 453 residues: Probable exopolygalacturonase B (453 aa).

The first 16 residues, 1–16 (MKFFALAALFASTVNS), serve as a signal peptide directing secretion. Asparagine 185 and asparagine 225 each carry an N-linked (GlcNAc...) asparagine glycan. Aspartate 255 functions as the Proton donor in the catalytic mechanism. Cysteine 257 and cysteine 274 are disulfide-bonded. Residues asparagine 263 and asparagine 275 are each glycosylated (N-linked (GlcNAc...) asparagine). Histidine 278 is an active-site residue. PbH1 repeat units lie at residues 295 to 316 (IENVWIENVTLLNGENGARLKA) and 327 to 348 (INNVTYKNIHVENTDNPIVLDQ). N-linked (GlcNAc...) asparagine glycans are attached at residues asparagine 302, asparagine 329, asparagine 354, and asparagine 366. Residues 362–405 (PSRVNFTNIVFEDIYGTSSGKRGKVVADLTCSPNAVCSGIRLKN) form a PbH1 3 repeat. A disulfide bridge connects residues cysteine 392 and cysteine 398. The N-linked (GlcNAc...) asparagine glycan is linked to asparagine 436.

This sequence belongs to the glycosyl hydrolase 28 family.

It is found in the secreted. It carries out the reaction [(1-&gt;4)-alpha-D-galacturonosyl](n) + H2O = alpha-D-galacturonate + [(1-&gt;4)-alpha-D-galacturonosyl](n-1). Specific in hydrolyzing the terminal glycosidic bond of polygalacturonic acid and oligogalacturonates. This chain is Probable exopolygalacturonase B (pgxB), found in Aspergillus fumigatus (strain ATCC MYA-4609 / CBS 101355 / FGSC A1100 / Af293) (Neosartorya fumigata).